Reading from the N-terminus, the 353-residue chain is 3'(2'),5'-bisphosphate nucleotidase (353 aa).

The active-site Proton acceptor is Asp-50. 4 residues coordinate Mg(2+): Glu-73, Asp-136, Ile-138, and Asp-139. The Proton acceptor role is filled by Thr-141. Adenosine 3',5'-bisphosphate-binding residues include Thr-141, His-232, Ser-256, Lys-259, Arg-273, and Asp-286. The AMP site is built by His-232, Ser-256, Lys-259, Arg-273, and Asp-286. Asp-286 serves as a coordination point for Mg(2+).

It belongs to the inositol monophosphatase superfamily. Mg(2+) serves as cofactor.

The enzyme catalyses 3'-phosphoadenylyl sulfate + H2O = adenosine 5'-phosphosulfate + phosphate. It catalyses the reaction adenosine 3',5'-bisphosphate + H2O = AMP + phosphate. It carries out the reaction adenosine 2',5'-bisphosphate + H2O = AMP + phosphate. The catalysed reaction is 1D-myo-inositol 1,4-bisphosphate + H2O = 1D-myo-inositol 4-phosphate + phosphate. The enzyme catalyses 1D-myo-inositol 1,3,4-trisphosphate + H2O = 1D-myo-inositol 3,4-bisphosphate + phosphate. Its activity is regulated as follows. Inhibited by Li(+) and Na(+). In terms of biological role, phosphatase that converts adenosine 3'-phosphate 5'-phosphosulfate (PAPS) to adenosine 5'-phosphosulfate (APS) and 3'(2')-phosphoadenosine 5'-phosphate (PAP) to AMP. May regulate the flux of sulfur in the sulfur-activation pathway by converting PAPS to APS. Is also able to hydrolyze inositol 1,4-bisphosphate (Ins(1,4)P2) and inositol 1,3,4-trisphosphate (Ins(1,3,4)P3), but is not active on inositol 1,4,5-trisphosphate, inositol 1-phosphate, fructose 1,6-bisphosphate, AMP and ATP. Confers resistance to lithium. This is 3'(2'),5'-bisphosphate nucleotidase (tol1) from Schizosaccharomyces pombe (strain 972 / ATCC 24843) (Fission yeast).